The following is a 216-amino-acid chain: Small ribosomal subunit protein uS3 (216 aa).

The region spanning 24–93 is the KH type-2 domain; sequence IKEFLEYRLA…NPQIDVIDVS (70 aa).

It belongs to the universal ribosomal protein uS3 family. Part of the 30S ribosomal subunit.

Its function is as follows. Binds the lower part of the 30S subunit head. The polypeptide is Small ribosomal subunit protein uS3 (Pyrobaculum calidifontis (strain DSM 21063 / JCM 11548 / VA1)).